A 201-amino-acid polypeptide reads, in one-letter code: Single-stranded DNA-binding protein DdrA (201 aa).

This sequence belongs to the RAD52 family. In terms of assembly, the truncated form (1-160) of DdrA forms heptameric rings that can assemble into a 3-ring structure.

SsDNA-binding protein that contributes to the ionizing radiation resistance of D.deserti. Plays a role in DNA repair and genome reconstitution, in a RecA-independent process, since DdrA is essential for recovery from severe genomic fragmentation as a result of exposure to severe levels of ionizing radiation in an environment lacking nutrients. In vitro, binds to the 3'-ends of single-stranded DNA, and probably protects them from nuclease degradation. Thus, DdrA is part of a DNA end-protection system that helps to preserve genome integrity following irradiation or desiccation. This Deinococcus deserti (strain DSM 17065 / CIP 109153 / LMG 22923 / VCD115) protein is Single-stranded DNA-binding protein DdrA (ddrA).